The primary structure comprises 90 residues: Molybdopterin synthase sulfur carrier subunit (90 aa).

G90 is subject to 1-thioglycine; alternate. Residue G90 is modified to Glycyl adenylate; alternate.

This sequence belongs to the MoaD family. MOCS2A subfamily. In terms of assembly, heterotetramer; composed of 2 small (Mocs2A) and 2 large (Mocs2B) subunits. Post-translationally, C-terminal thiocarboxylation occurs in 2 steps, it is first acyl-adenylated (-COAMP) via the hesA/moeB/thiF part of MOCS3, then thiocarboxylated (-COSH) via the rhodanese domain of MOCS3.

It is found in the cytoplasm. It functions in the pathway cofactor biosynthesis; molybdopterin biosynthesis. Acts as a sulfur carrier required for molybdopterin biosynthesis. Component of the molybdopterin synthase complex that catalyzes the conversion of precursor Z into molybdopterin by mediating the incorporation of 2 sulfur atoms into precursor Z to generate a dithiolene group. In the complex, serves as sulfur donor by being thiocarboxylated (-COSH) at its C-terminus by MOCS3. After interaction with Mocs2B, the sulfur is then transferred to precursor Z to form molybdopterin. In Drosophila erecta (Fruit fly), this protein is Molybdopterin synthase sulfur carrier subunit.